A 434-amino-acid chain; its full sequence is Bcl-2-like protein 13 (434 aa).

A BH4 motif is present at residues 14-30 (ETKYVVLSYLGLLSQEK). Ser35 is modified (phosphoserine). The short motif at 97-113 (IEDCLAHLGERVSQDLK) is the BH3 element. Residues 144–154 (ASGWNKLLVPL) carry the BH1 motif. The BH2 signature appears at 190–203 (FIIQQGGWGSVFSL). Residues 224-245 (LPSDNSGQVSPPESPTVTTSWQ) are disordered. A compositionally biased stretch (polar residues) spans 226–245 (SDNSGQVSPPESPTVTTSWQ). One copy of the A repeat lies at 243 to 253 (SWQSESLPVSL). Phosphoserine is present on residues Ser256, Ser258, Ser300, Ser343, Ser347, Ser377, and Ser387. The stretch at 258 to 268 (SWHTESLPVSL) is one A; approximate repeat. The disordered stretch occupies residues 282–303 (EVKSLDSSGAGEKSENNSSNSD). The segment at 363 to 398 (RPEAVERAEGAAQLSEERAGSRKKSHTGEAAAVRGA) is disordered. Positions 365–382 (EAVERAEGAAQLSEERAG) are enriched in basic and acidic residues. A helical transmembrane segment spans residues 409–429 (VLLFGGAAAVAILAVAVGVAL).

This sequence belongs to the Bcl-2 family. As to quaternary structure, monomer.

The protein resides in the mitochondrion membrane. Its function is as follows. May promote the activation of caspase-3 and apoptosis. This chain is Bcl-2-like protein 13 (Bcl2l13), found in Mus musculus (Mouse).